Reading from the N-terminus, the 420-residue chain is tRNA(Ile)-lysidine synthase (420 aa).

28–33 (SGGLDS) is an ATP binding site.

The protein belongs to the tRNA(Ile)-lysidine synthase family.

The protein localises to the cytoplasm. It carries out the reaction cytidine(34) in tRNA(Ile2) + L-lysine + ATP = lysidine(34) in tRNA(Ile2) + AMP + diphosphate + H(+). Functionally, ligates lysine onto the cytidine present at position 34 of the AUA codon-specific tRNA(Ile) that contains the anticodon CAU, in an ATP-dependent manner. Cytidine is converted to lysidine, thus changing the amino acid specificity of the tRNA from methionine to isoleucine. In Hydrogenovibrio crunogenus (strain DSM 25203 / XCL-2) (Thiomicrospira crunogena), this protein is tRNA(Ile)-lysidine synthase.